The following is a 282-amino-acid chain: V-set domain-containing T-cell activation inhibitor 1 (282 aa).

An N-terminal signal peptide occupies residues 1 to 24 (MASLGQIIFWSIINVIIILAGAIV). Ig-like V-type domains lie at 35 to 144 (HFIT…ANLE) and 153 to 241 (PEIN…IKVT). 2 cysteine pairs are disulfide-bonded: Cys-56–Cys-130 and Cys-168–Cys-225. Asn-216 is a glycosylation site (N-linked (GlcNAc...) asparagine). Residue Gly-257 is the site of GPI-anchor amidated glycine attachment. The propeptide at 258-282 (PSPCVSSVSAAGWALLSLSCCLMLR) is removed in mature form.

This sequence belongs to the immunoglobulin superfamily. BTN/MOG family. In terms of processing, N-glycosylated.

The protein localises to the cell membrane. Functionally, negatively regulates T-cell-mediated immune response by inhibiting T-cell activation, proliferation, cytokine production and development of cytotoxicity. When expressed on the cell surface of tumor macrophages, plays an important role, together with regulatory T-cells (Treg), in the suppression of tumor-associated antigen-specific T-cell immunity. Involved in promoting epithelial cell transformation. The protein is V-set domain-containing T-cell activation inhibitor 1 of Rattus norvegicus (Rat).